The primary structure comprises 47 residues: Type II secretion system protein N (47 aa).

This sequence belongs to the GSP N family.

It localises to the cell inner membrane. Functionally, involved in a type II secretion system (T2SS, formerly general secretion pathway, GSP) for the export of proteins. This Aeromonas salmonicida protein is Type II secretion system protein N (exeN).